The chain runs to 396 residues: S-adenosylmethionine synthase (396 aa).

His16 contributes to the ATP binding site. Residue Asp18 participates in Mg(2+) binding. Residue Glu44 participates in K(+) binding. L-methionine contacts are provided by Glu57 and Gln100. Residues 100-110 (QSQDIARGVDN) are flexible loop. Residues 162-164 (DGK), Asp237, 243-244 (RK), Ala260, and Lys264 contribute to the ATP site. Asp237 contacts L-methionine. Residue Lys268 coordinates L-methionine.

This sequence belongs to the AdoMet synthase family. Homotetramer; dimer of dimers. It depends on Mg(2+) as a cofactor. Requires K(+) as cofactor.

It is found in the cytoplasm. The catalysed reaction is L-methionine + ATP + H2O = S-adenosyl-L-methionine + phosphate + diphosphate. The protein operates within amino-acid biosynthesis; S-adenosyl-L-methionine biosynthesis; S-adenosyl-L-methionine from L-methionine: step 1/1. In terms of biological role, catalyzes the formation of S-adenosylmethionine (AdoMet) from methionine and ATP. The overall synthetic reaction is composed of two sequential steps, AdoMet formation and the subsequent tripolyphosphate hydrolysis which occurs prior to release of AdoMet from the enzyme. The protein is S-adenosylmethionine synthase of Myxococcus xanthus.